Consider the following 105-residue polypeptide: uncharacterized protein (105 aa).

The chain crosses the membrane as a helical span at residues 13 to 35 (LLFAFVVVIVVLTLSYVYAQNII).

Its subcellular location is the membrane. This is an uncharacterized protein from Archaeoglobus fulgidus (strain ATCC 49558 / DSM 4304 / JCM 9628 / NBRC 100126 / VC-16).